A 1255-amino-acid polypeptide reads, in one-letter code: MELAALCRWGLLLALLPPGAASTQVCTGTDMKLRLPASPETHLDMLRHLYQGCQVVQGNLELTYLPTNASLSFLQDIQEVQGYVLIAHNQVRQVPLQRLRIVRGTQLFEDNYALAVLDNGDPLNNTTPVTGASPGGLRELQLRSLTEILKGGVLIQRNPQLCYQDTILWKDIFHKNNQLALTLIDTNRSRACHPCSPMCKGSRCWGESSEDCQSLTRTVCAGGCARCKGPLPTDCCHEQCAAGCTGPKHSDCLACLHFNHSGICELHCPALVTYNTDTFESMPNPEGRYTFGASCVTACPYNYLSTDVGSCTLVCPLHNQEVTAEDGTQRCEKCSKPCARVCYGLGMEHLREVRAVTSANIQEFAGCKKIFGSLAFLPESFDGDPASNTAPLQPEQLQVFETLEEITGYLYISAWPDSLPDLSVFQNLQVIRGRILHNGAYSLTLQGLGISWLGLRSLRELGSGLALIHHNTHLCFVHTVPWDQLFRNPHQALLHTANRPEDECVGEGLACHQLCARGHCWGPGPTQCVNCSQFLRGQECVEECRVLQGLPREYVNARHCLPCHPECQPQNGSVTCFGPEADQCVACAHYKDPPFCVARCPSGVKPDLSYMPIWKFPDEEGACQPCPINCTHSCVDLDDKGCPAEQRASPLTSIISAVVGILLVVVLGVVFGILIKRRQQKIRKYTMRRLLQETELVEPLTPSGAMPNQAQMRILKETELRKVKVLGSGAFGTVYKGIWIPDGENVKIPVAIKVLRENTSPKANKEILDEAYVMAGVGSPYVSRLLGICLTSTVQLVTQLMPYGCLLDHVRENRGRLGSQDLLNWCMQIAKGMSYLEDVRLVHRDLAARNVLVKSPNHVKITDFGLARLLDIDETEYHADGGKVPIKWMALESILRRRFTHQSDVWSYGVTVWELMTFGAKPYDGIPAREIPDLLEKGERLPQPPICTIDVYMIMVKCWMIDSECRPRFRELVSEFSRMARDPQRFVVIQNEDLGPASPLDSTFYRSLLEDDDMGDLVDAEEYLVPQQGFFCPDPAPGAGGMVHHRHRSSSTRSGGGDLTLGLEPSEEEAPRSPLAPSEGAGSDVFDGDLGMGAAKGLQSLPTHDPSPLQRYSEDPTVPLPSETDGYVAPLTCSPQPEYVNQPDVRPQPPSPREGPLPAARPAGATLERPKTLSPGKNGVVKDVFAFGGAVENPEYLTPQGGAAPQPHPPPAFSPAFDNLYYWDQDPPERGAPPSTFKGTPTAENPEYLGLDVPV.

The signal sequence occupies residues 1–22 (MELAALCRWGLLLALLPPGAAS). Topologically, residues 23-652 (TQVCTGTDMK…PAEQRASPLT (630 aa)) are extracellular. A disulfide bond links C26 and C53. N-linked (GlcNAc...) asparagine glycosylation is found at N68 and N124. Disulfide bonds link C162–C192, C195–C204, C199–C212, C220–C227, C224–C235, C236–C244, C240–C252, C255–C264, C268–C295, C299–C311, C315–C331, C334–C338, C342–C367, C475–C504, C511–C520, and C515–C528. Residue T182 is modified to Phosphothreonine. An N-linked (GlcNAc...) asparagine glycan is attached at N187. The N-linked (GlcNAc...) asparagine glycan is linked to N259. Residue N530 is glycosylated (N-linked (GlcNAc...) asparagine). 8 disulfide bridges follow: C531/C540, C544/C560, C563/C576, C567/C584, C587/C596, C600/C623, C626/C634, and C630/C642. Residue N571 is glycosylated (N-linked (GlcNAc...) asparagine). A glycan (N-linked (GlcNAc...) asparagine) is linked at N629. The helical transmembrane segment at 653–675 (SIISAVVGILLVVVLGVVFGILI) threads the bilayer. The required for interaction with KPNB1 and EEA1 stretch occupies residues 676–689 (KRRQQKIRKYTMRR). A Nuclear localization signal motif is present at residues 676–689 (KRRQQKIRKYTMRR). The Cytoplasmic segment spans residues 676 to 1255 (KRRQQKIRKY…PEYLGLDVPV (580 aa)). Positions 720–987 (LRKVKVLGSG…RMARDPQRFV (268 aa)) constitute a Protein kinase domain. ATP contacts are provided by residues 726–734 (LGSGAFGTV) and K753. Residue D845 is the Proton acceptor of the active site. At Y877 the chain carries Phosphotyrosine. Disordered regions lie at residues 1035-1179 (PAPG…GKNG) and 1196-1255 (YLTP…DVPV). S1054, S1078, S1083, and S1107 each carry phosphoserine. A phosphotyrosine mark is found at Y1112 and Y1139. Positions 1146-1155 (RPQPPSPREG) are enriched in pro residues. Residue S1151 is modified to Phosphoserine. A Phosphothreonine modification is found at T1166. The interaction with PIK3C2B stretch occupies residues 1195-1197 (EYL). Y1196 carries the phosphotyrosine modification. At Y1248 the chain carries Phosphotyrosine; by autocatalysis.

The protein belongs to the protein kinase superfamily. Tyr protein kinase family. EGF receptor subfamily. As to quaternary structure, homodimer. Heterodimer with EGFR, ERBB3 and ERBB4. Part of a complex with EGFR and either PIK3C2A or PIK3C2B. May interact with PIK3C2B when phosphorylated on Tyr-1196. Interacts with PLXNB1. Interacts (when phosphorylated on Tyr-1248) with MEMO1. Interacts with MUC1; the interaction is enhanced by heregulin (HRG). Interacts (when phosphorylated on Tyr-1139) with GRB7 (via SH2 domain). Interacts (when phosphorylated on Tyr-1248) with ERBIN. Interacts with KPNB1, RANBP2, EEA1, CRM1 and CLTC. Interacts with PTK6. Interacts with RPA194 and ACTB. Interacts with PRKCABP, SRC and MYOC. Interacts (preferentially with the tyrosine phosphorylated form) with CPNE3; this interaction occurs at the cell membrane and is increased in a growth factor heregulin-dependent manner. Interacts with HSP90AA1 and HSP90AB1 in an ATP-dependent manner; the interaction suppresses ERBB2 kinase activity. Interacts with SORL1; this interaction regulates ERBB2 subcellular distribution by promoting its recycling after internalization from endosomes back to the plasma membrane, hence stimulates ERBB2-mediated signaling. Interacts with SH3BGRL. Interacts with ROR1. Post-translationally, autophosphorylated. Autophosphorylation occurs in trans, i.e. one subunit of the dimeric receptor phosphorylates tyrosine residues on the other subunit. Ligand-binding increases phosphorylation on tyrosine residues. Signaling via SEMA4C promotes phosphorylation at Tyr-1248. Dephosphorylated by PTPN12. Expressed in a variety of tumor tissues including primary breast tumors and tumors from small bowel, esophagus, kidney and mouth.

It localises to the cell membrane. Its subcellular location is the cell projection. The protein resides in the ruffle membrane. It is found in the early endosome. The protein localises to the cytoplasm. It localises to the perinuclear region. Its subcellular location is the nucleus. The enzyme catalyses L-tyrosyl-[protein] + ATP = O-phospho-L-tyrosyl-[protein] + ADP + H(+). Its activity is regulated as follows. Activated by dimerization. Not activated by EGF, TGF-alpha and amphiregulin. Interaction with PTK6 increases its intrinsic kinase activity. Protein tyrosine kinase that is part of several cell surface receptor complexes, but that apparently needs a coreceptor for ligand binding. Essential component of a neuregulin-receptor complex, although neuregulins do not interact with it alone. GP30 is a potential ligand for this receptor. Regulates outgrowth and stabilization of peripheral microtubules (MTs). Upon ERBB2 activation, the MEMO1-RHOA-DIAPH1 signaling pathway elicits the phosphorylation and thus the inhibition of GSK3B at cell membrane. This prevents the phosphorylation of APC and CLASP2, allowing its association with the cell membrane. In turn, membrane-bound APC allows the localization of MACF1 to the cell membrane, which is required for microtubule capture and stabilization. Functionally, in the nucleus is involved in transcriptional regulation. Associates with the 5'-TCAAATTC-3' sequence in the PTGS2/COX-2 promoter and activates its transcription. Implicated in transcriptional activation of CDKN1A; the function involves STAT3 and SRC. Involved in the transcription of rRNA genes by RNA Pol I and enhances protein synthesis and cell growth. This chain is Receptor tyrosine-protein kinase erbB-2 (ERBB2), found in Homo sapiens (Human).